A 239-amino-acid chain; its full sequence is Dolichyldiphosphatase (239 aa).

The Lumenal portion of the chain corresponds to 1–34 (MNSTAAAINPNPNVIPFDDTYILYDSHDFLSFLS). A helical transmembrane segment spans residues 35-55 (AYFSLMPILVLAFYLSWFIIT). Over 56-131 (RELEACIVAF…KIYTSWKNLN (76 aa)) the chain is Cytoplasmic. The helical transmembrane segment at 132–152 (FLEKCIFSGALALLSFCVCFS) threads the bilayer. Residues 153–164 (RVYLHYHNLDQV) lie on the Lumenal side of the membrane. The chain crosses the membrane as a helical span at residues 165-185 (IVGFSVGALTGSLYFFIVGII). At 186–239 (RELGLINWFLKLRIVRLFYMTDSYNLAPLTLKENYEAYWKRINQRSFNDKSKRD) the chain is on the cytoplasmic side.

This sequence belongs to the dolichyldiphosphatase family.

It is found in the endoplasmic reticulum membrane. The catalysed reaction is a di-trans,poly-cis-dolichyl diphosphate + H2O = a di-trans,poly-cis-dolichyl phosphate + phosphate + H(+). It participates in protein modification; protein glycosylation. Its function is as follows. Non-essential protein which is required for efficient N-glycosylation. Necessary for maintaining optimal levels of dolichol-linked oligosaccharides. Hydrolyzes dolichyl pyrophosphate at a very high rate and dolichyl monophosphate at a much lower rate. Does not act on phosphatidate. The protein is Dolichyldiphosphatase (CAX4) of Saccharomyces cerevisiae (strain ATCC 204508 / S288c) (Baker's yeast).